Consider the following 414-residue polypeptide: Tryptophan synthase beta chain (414 aa).

Over residues 1–26 (MVSTFSRKDQNYKNDDLNQPSKEGRF) the composition is skewed to basic and acidic residues. Residues 1–27 (MVSTFSRKDQNYKNDDLNQPSKEGRFG) form a disordered region. K109 is modified (N6-(pyridoxal phosphate)lysine).

The protein belongs to the TrpB family. As to quaternary structure, tetramer of two alpha and two beta chains. Pyridoxal 5'-phosphate serves as cofactor.

The catalysed reaction is (1S,2R)-1-C-(indol-3-yl)glycerol 3-phosphate + L-serine = D-glyceraldehyde 3-phosphate + L-tryptophan + H2O. It participates in amino-acid biosynthesis; L-tryptophan biosynthesis; L-tryptophan from chorismate: step 5/5. Its function is as follows. The beta subunit is responsible for the synthesis of L-tryptophan from indole and L-serine. This is Tryptophan synthase beta chain from Prochlorococcus marinus (strain MIT 9301).